The sequence spans 183 residues: Putative 3-methyladenine DNA glycosylase (183 aa).

The protein belongs to the DNA glycosylase MPG family.

The sequence is that of Putative 3-methyladenine DNA glycosylase from Legionella pneumophila (strain Corby).